The sequence spans 334 residues: Cytoskeleton protein RodZ (334 aa).

Topologically, residues 1–111 are cytoplasmic; the sequence is MNTEATHDQN…LGKRRKKRDG (111 aa). In terms of domain architecture, HTH cro/C1-type spans 19-71; the sequence is LRNAREQLGLSQQAVAERLCLKVSTVRDIEEDKAPSDLASTFLRGYIRSYARL. The H-T-H motif DNA-binding region spans 30–49; it reads QQAVAERLCLKVSTVRDIEE. Residues 112-132 traverse the membrane as a helical; Signal-anchor for type II membrane protein segment; that stretch reads WLMSFTWLVLFVVVGLTGAWW. At 133–334 the chain is on the periplasmic side; sequence WQNHKAQQEE…TLNAEPTPAQ (202 aa). The tract at residues 154–241 is disordered; the sequence is LNADKDSGQS…PSALPTSQAG (88 aa). 2 stretches are compositionally biased toward low complexity: residues 176-211 and 219-241; these read TTPA…TVVA and TAAT…SQAG.

It belongs to the RodZ family.

Its subcellular location is the cell inner membrane. Cytoskeletal protein that is involved in cell-shape control through regulation of the length of the long axis. The chain is Cytoskeleton protein RodZ from Salmonella choleraesuis (strain SC-B67).